We begin with the raw amino-acid sequence, 125 residues long: Holo-[acyl-carrier-protein] synthase (125 aa).

Mg(2+)-binding residues include aspartate 8 and glutamate 57.

Belongs to the P-Pant transferase superfamily. AcpS family. The cofactor is Mg(2+).

The protein resides in the cytoplasm. It catalyses the reaction apo-[ACP] + CoA = holo-[ACP] + adenosine 3',5'-bisphosphate + H(+). Functionally, transfers the 4'-phosphopantetheine moiety from coenzyme A to a Ser of acyl-carrier-protein. The polypeptide is Holo-[acyl-carrier-protein] synthase (Laribacter hongkongensis (strain HLHK9)).